The primary structure comprises 100 residues: Large ribosomal subunit protein uL23 (100 aa).

It belongs to the universal ribosomal protein uL23 family. In terms of assembly, part of the 50S ribosomal subunit. Contacts protein L29, and trigger factor when it is bound to the ribosome.

Functionally, one of the early assembly proteins it binds 23S rRNA. One of the proteins that surrounds the polypeptide exit tunnel on the outside of the ribosome. Forms the main docking site for trigger factor binding to the ribosome. The chain is Large ribosomal subunit protein uL23 from Sodalis glossinidius (strain morsitans).